A 311-amino-acid polypeptide reads, in one-letter code: 4-diphosphocytidyl-2-C-methyl-D-erythritol kinase (311 aa).

The active site involves Lys16. Pro100–Ser110 provides a ligand contact to ATP. Residue Asp142 is part of the active site.

It belongs to the GHMP kinase family. IspE subfamily.

The catalysed reaction is 4-CDP-2-C-methyl-D-erythritol + ATP = 4-CDP-2-C-methyl-D-erythritol 2-phosphate + ADP + H(+). It participates in isoprenoid biosynthesis; isopentenyl diphosphate biosynthesis via DXP pathway; isopentenyl diphosphate from 1-deoxy-D-xylulose 5-phosphate: step 3/6. Catalyzes the phosphorylation of the position 2 hydroxy group of 4-diphosphocytidyl-2C-methyl-D-erythritol. The sequence is that of 4-diphosphocytidyl-2-C-methyl-D-erythritol kinase from Prochlorococcus marinus (strain MIT 9215).